Consider the following 101-residue polypeptide: Movement protein (101 aa).

Residues 1 to 22 form a disordered region; that stretch reads MDPQNSFLLQPRVPTAAPTSGG. Residues 30–50 form a helical membrane-spanning segment; sequence EVAILSFVGLICFYLLYLWVL. Positions 79–101 are disordered; it reads NPIPNTQAPPSQGNPGPFVPGTG. Over residues 80–92 the composition is skewed to polar residues; the sequence is PIPNTQAPPSQGN.

It belongs to the mastrevirus movement protein family. Interacts with the capsid protein (CP). Part of a MP-CP-viral DNA complex.

It is found in the host membrane. Functionally, involved in the viral transport within, and between cells. The chain is Movement protein from Avena sativa (Oat).